A 176-amino-acid chain; its full sequence is Transmembrane protein 238 (176 aa).

The interval 1–21 (MAAASPVCGSQASAVGASSPP) is disordered. At 1-36 (MAAASPVCGSQASAVGASSPPAPAPAPAAGLGRCRM) the chain is on the cytoplasmic side. Positions 9 to 19 (GSQASAVGASS) are enriched in low complexity. Residues 37-57 (ALLLAVALDVAGMAALLTGVF) traverse the membrane as a helical segment. The Extracellular portion of the chain corresponds to 58-69 (AQLQVRGRDFGD). A helical transmembrane segment spans residues 70–90 (LLIYSGALLVFLSLLGWILWY). The Cytoplasmic segment spans residues 91–176 (TGNIEISRQE…GSVAAGTGSE (86 aa)). Low complexity predominate over residues 124–135 (SAPATASPRTTA). Residues 124–156 (SAPATASPRTTAGLRSARRANRAPQPSSSGSRR) are disordered. At Ser-175 the chain carries Phosphoserine.

The protein resides in the membrane. The polypeptide is Transmembrane protein 238 (Tmem238) (Mus musculus (Mouse)).